Here is a 194-residue protein sequence, read N- to C-terminus: Large ribosomal subunit protein eL15 (194 aa).

Residues Lys-162–His-173 show a composition bias toward basic residues. Residues Lys-162–Lys-194 form a disordered region. Residues Ser-185–Lys-194 are compositionally biased toward polar residues.

It belongs to the eukaryotic ribosomal protein eL15 family.

This Methanocorpusculum labreanum (strain ATCC 43576 / DSM 4855 / Z) protein is Large ribosomal subunit protein eL15.